The primary structure comprises 119 residues: Cadmium resistance transcriptional regulatory protein CadC (119 aa).

Cd(2+) is bound by residues cysteine 6, cysteine 10, cysteine 57, and cysteine 59. An HTH arsR-type domain is found at 23-118 (LANFDTPSVS…LGVNFKEEVL (96 aa)). A DNA-binding region (H-T-H motif) is located at residues 58-77 (VCDIANIIDASVATTSHHLN).

Homodimer.

Functionally, metal-binding repressor for the cad operon. Involved in resistance to heavy metals, such as cadmium, bismuth, zinc or lead. Metal binding causes the repressor to dissociate from the DNA. In Lactococcus lactis subsp. lactis (Streptococcus lactis), this protein is Cadmium resistance transcriptional regulatory protein CadC (cadC).